The chain runs to 399 residues: CCA-adding enzyme (399 aa).

2 residues coordinate ATP: Gly-33 and Arg-36. Residues Gly-33 and Arg-36 each coordinate CTP. Residues Asp-46 and Asp-48 each coordinate Mg(2+). Residues Arg-117, Asp-160, Arg-163, Arg-166, and Arg-169 each coordinate ATP. Residues Arg-117, Asp-160, Arg-163, Arg-166, and Arg-169 each contribute to the CTP site.

The protein belongs to the tRNA nucleotidyltransferase/poly(A) polymerase family. Bacterial CCA-adding enzyme type 3 subfamily. Homodimer. It depends on Mg(2+) as a cofactor.

It carries out the reaction a tRNA precursor + 2 CTP + ATP = a tRNA with a 3' CCA end + 3 diphosphate. It catalyses the reaction a tRNA with a 3' CCA end + 2 CTP + ATP = a tRNA with a 3' CCACCA end + 3 diphosphate. Functionally, catalyzes the addition and repair of the essential 3'-terminal CCA sequence in tRNAs without using a nucleic acid template. Adds these three nucleotides in the order of C, C, and A to the tRNA nucleotide-73, using CTP and ATP as substrates and producing inorganic pyrophosphate. tRNA 3'-terminal CCA addition is required both for tRNA processing and repair. Also involved in tRNA surveillance by mediating tandem CCA addition to generate a CCACCA at the 3' terminus of unstable tRNAs. While stable tRNAs receive only 3'-terminal CCA, unstable tRNAs are marked with CCACCA and rapidly degraded. The polypeptide is CCA-adding enzyme (Lactobacillus helveticus (strain DPC 4571)).